The following is a 164-amino-acid chain: S-ribosylhomocysteine lyase (164 aa).

Positions 54, 58, and 128 each coordinate Fe cation.

This sequence belongs to the LuxS family. In terms of assembly, homodimer. Fe cation is required as a cofactor.

The enzyme catalyses S-(5-deoxy-D-ribos-5-yl)-L-homocysteine = (S)-4,5-dihydroxypentane-2,3-dione + L-homocysteine. In terms of biological role, involved in the synthesis of autoinducer 2 (AI-2) which is secreted by bacteria and is used to communicate both the cell density and the metabolic potential of the environment. The regulation of gene expression in response to changes in cell density is called quorum sensing. Catalyzes the transformation of S-ribosylhomocysteine (RHC) to homocysteine (HC) and 4,5-dihydroxy-2,3-pentadione (DPD). The sequence is that of S-ribosylhomocysteine lyase from Campylobacter hominis (strain ATCC BAA-381 / DSM 21671 / CCUG 45161 / LMG 19568 / NCTC 13146 / CH001A).